Consider the following 354-residue polypeptide: Guanine nucleotide-binding protein G(o) subunit alpha (354 aa).

The N-myristoyl glycine moiety is linked to residue G2. The S-palmitoyl cysteine moiety is linked to residue C3. The G-alpha domain occupies 32-354; the sequence is KDIKLLLLGA…ANNLRGCGLY (323 aa). Residues 35-48 are G1 motif; it reads KLLLLGAGESGKST. GTP contacts are provided by residues 40 to 47, 176 to 182, 201 to 205, 270 to 273, and A326; these read GAGESGKS, LRTRVKT, DVGGQ, and NKKD. S47 and T182 together coordinate Mg(2+). Residues 174–182 are G2 motif; it reads DILRTRVKT. The G3 motif stretch occupies residues 197-206; it reads FKLFDVGGQR. The G4 motif stretch occupies residues 266 to 273; sequence ILFLNKKD. Residues 324 to 329 form a G5 motif region; that stretch reads TCATDT.

Belongs to the G-alpha family. G(i/o/t/z) subfamily. In terms of assembly, g proteins are composed of 3 units; alpha, beta and gamma. The alpha chain contains the guanine nucleotide binding site.

Functionally, guanine nucleotide-binding proteins (G proteins) are involved as modulators or transducers in various transmembrane signaling systems. The G(o) protein function is not clear. This Planorbella trivolvis (Marsh rams-horn) protein is Guanine nucleotide-binding protein G(o) subunit alpha.